The following is a 198-amino-acid chain: Recombination protein RecR (198 aa).

The C4-type zinc-finger motif lies at 57–72 (CSVCGRLTDDDPCSIC). Positions 80–175 (TTILVLEDSR…KVTRLARGLA (96 aa)) constitute a Toprim domain.

This sequence belongs to the RecR family.

In terms of biological role, may play a role in DNA repair. It seems to be involved in an RecBC-independent recombinational process of DNA repair. It may act with RecF and RecO. This Streptococcus pneumoniae (strain Hungary19A-6) protein is Recombination protein RecR.